The sequence spans 594 residues: Alanine--tRNA ligase (594 aa).

4 residues coordinate Zn(2+): H456, H460, C558, and H562.

This sequence belongs to the class-II aminoacyl-tRNA synthetase family. The cofactor is Zn(2+).

The protein resides in the cytoplasm. The enzyme catalyses tRNA(Ala) + L-alanine + ATP = L-alanyl-tRNA(Ala) + AMP + diphosphate. Catalyzes the attachment of alanine to tRNA(Ala) in a two-step reaction: alanine is first activated by ATP to form Ala-AMP and then transferred to the acceptor end of tRNA(Ala). Also edits incorrectly charged Ser-tRNA(Ala) and Gly-tRNA(Ala) via its editing domain. The protein is Alanine--tRNA ligase (alaS) of Borreliella afzelii (strain PKo) (Borrelia afzelii).